The sequence spans 463 residues: Glutamate--tRNA ligase 1 (463 aa).

The 'HIGH' region signature appears at 10–20 (PSPTGYLHIGG). The short motif at 238–242 (KLSKR) is the 'KMSKS' region element. Lys-241 is an ATP binding site.

This sequence belongs to the class-I aminoacyl-tRNA synthetase family. Glutamate--tRNA ligase type 1 subfamily. Monomer.

It is found in the cytoplasm. It catalyses the reaction tRNA(Glu) + L-glutamate + ATP = L-glutamyl-tRNA(Glu) + AMP + diphosphate. Functionally, catalyzes the attachment of glutamate to tRNA(Glu) in a two-step reaction: glutamate is first activated by ATP to form Glu-AMP and then transferred to the acceptor end of tRNA(Glu). The polypeptide is Glutamate--tRNA ligase 1 (Helicobacter pylori (strain HPAG1)).